Consider the following 629-residue polypeptide: tRNA uridine 5-carboxymethylaminomethyl modification enzyme MnmG (629 aa).

Residues 14–19 (GAGHAG), V126, and S181 contribute to the FAD site. 273-287 (GPRYCPSIEDKVVRF) provides a ligand contact to NAD(+). Q370 contacts FAD.

It belongs to the MnmG family. As to quaternary structure, homodimer. Heterotetramer of two MnmE and two MnmG subunits. FAD serves as cofactor.

It localises to the cytoplasm. In terms of biological role, NAD-binding protein involved in the addition of a carboxymethylaminomethyl (cmnm) group at the wobble position (U34) of certain tRNAs, forming tRNA-cmnm(5)s(2)U34. This Bacillus cereus (strain ATCC 10987 / NRS 248) protein is tRNA uridine 5-carboxymethylaminomethyl modification enzyme MnmG.